The sequence spans 58 residues: Attractin (58 aa).

Intrachain disulfides connect Cys4/Cys41, Cys13/Cys33, and Cys20/Cys26. Residue Asn8 is glycosylated (N-linked (GlcNAc...) asparagine).

In terms of tissue distribution, produced by the albumen gland of the egg cordons.

Its subcellular location is the secreted. In terms of biological role, water-borne pheromone that attract the marine mollusk Aplysia into breeding aggregations and coordinate male and female reproductive behavior within the aggregation. The protein is Attractin (ATT) of Aplysia fasciata (Mottled sea hare).